The primary structure comprises 269 residues: Integral membrane protein 2C (269 aa).

T39 carries the phosphothreonine modification. Residues 57–77 (VGGVCYLSMGMVVLLMGLVFA) traverse the membrane as a helical; Signal-anchor for type II membrane protein segment. In terms of domain architecture, BRICHOS spans 138-232 (FGGGDPADII…LCNGKDTYRL (95 aa)). The cysteines at positions 165 and 224 are disulfide-linked. N171 carries an N-linked (GlcNAc...) asparagine glycan.

The protein belongs to the ITM2 family. As to quaternary structure, interacts with BACE1. Interacts with APP. Interacts with STMN2. Type I membrane-bound, as well as soluble, furin has a pre-eminent role in ITM2C proteolytic processing. PCSK7 and PCSK5 may also be involved although to a lesser extent. The soluble form of PCSK7 is incapable of processing ITM2C. Fails to undergo shedding by ADAM10 and intramembrane cleavage by SPPL2B.

It localises to the lysosome membrane. The protein localises to the cell membrane. Functionally, negative regulator of amyloid-beta peptide production. May inhibit the processing of APP by blocking its access to alpha- and beta-secretase. Binding to the beta-secretase-cleaved APP C-terminal fragment is negligible, suggesting that ITM2C is a poor gamma-secretase cleavage inhibitor. May play a role in TNF-induced cell death and neuronal differentiation. The sequence is that of Integral membrane protein 2C (ITM2C) from Sus scrofa (Pig).